The sequence spans 298 residues: Acetylglutamate kinase (298 aa).

Substrate contacts are provided by residues 69–70, Arg91, and Asn196; that span reads GG.

It belongs to the acetylglutamate kinase family. ArgB subfamily.

Its subcellular location is the cytoplasm. The catalysed reaction is N-acetyl-L-glutamate + ATP = N-acetyl-L-glutamyl 5-phosphate + ADP. It functions in the pathway amino-acid biosynthesis; L-arginine biosynthesis; N(2)-acetyl-L-ornithine from L-glutamate: step 2/4. Functionally, catalyzes the ATP-dependent phosphorylation of N-acetyl-L-glutamate. The chain is Acetylglutamate kinase from Bradyrhizobium sp. (strain BTAi1 / ATCC BAA-1182).